A 173-amino-acid polypeptide reads, in one-letter code: MTYLVLLLGLCFVLGGLAVASNPSPYYGVVGLVLASVAGCGWLLSLGVSFVSLVLFMVYLGGMLVVFVYSVSLAADPFPEAWGDWRVVGYGASFILVVIAGMIVGGLIECWKVGVVTVDSGGMFSVRLDFSGVAMFYSYGVGMFLVAGWGLLLTLFVVLELVRGLSRGAIRAV.

5 helical membrane-spanning segments follow: residues 1–21 (MTYLVLLLGLCFVLGGLAVAS), 27–47 (YGVVGLVLASVAGCGWLLSLG), 48–68 (VSFVSLVLFMVYLGGMLVVFV), 88–108 (VGYGASFILVVIAGMIVGGLI), and 139–159 (YGVGMFLVAGWGLLLTLFVVL).

It belongs to the complex I subunit 6 family.

It localises to the mitochondrion membrane. The enzyme catalyses a ubiquinone + NADH + 5 H(+)(in) = a ubiquinol + NAD(+) + 4 H(+)(out). Functionally, core subunit of the mitochondrial membrane respiratory chain NADH dehydrogenase (Complex I) that is believed to belong to the minimal assembly required for catalysis. Complex I functions in the transfer of electrons from NADH to the respiratory chain. The immediate electron acceptor for the enzyme is believed to be ubiquinone. This Calidris maritima (Purple sandpiper) protein is NADH-ubiquinone oxidoreductase chain 6 (MT-ND6).